The primary structure comprises 247 residues: Programmed cell death 1 ligand 2 (247 aa).

The signal sequence occupies residues 1 to 19; that stretch reads MLLLLPILNLSLQLHPVAA. The Extracellular segment spans residues 20–221; the sequence is LFTVTAPKEV…RMEPKVPRTW (202 aa). An Ig-like V-type domain is found at 21–118; sequence FTVTAPKEVY…AWDYKYLTVK (98 aa). 2 disulfide bridges follow: cysteine 42–cysteine 102 and cysteine 143–cysteine 192. N-linked (GlcNAc...) asparagine glycans are attached at residues asparagine 64, asparagine 157, asparagine 163, and asparagine 189. The 82-residue stretch at 122–203 folds into the Ig-like C2-type domain; that stretch reads SYMRIDTRIL…FWNAHMKELT (82 aa). Residues 222 to 242 form a helical membrane-spanning segment; it reads PLHVFIPACTIALIFLAIVII. Residues 243–247 are Cytoplasmic-facing; the sequence is QRKRI.

This sequence belongs to the immunoglobulin superfamily. BTN/MOG family. As to quaternary structure, interacts with PDCD1. As to expression, expressed in immature and mature bone marrow-derived dendritic cells and splenic dendritic cells. Highly expressed in placenta, liver and weakly expressed in heart, spleen, lymph nodes and thymus. Also expressed in some tumor cell lines of lymphoid origin.

It localises to the cell membrane. Its function is as follows. Involved in the costimulatory signal essential for T-cell proliferation and IFNG production in a PDCD1-independent manner. Interaction with PDCD1 inhibits T-cell proliferation by blocking cell cycle progression and cytokine production. This is Programmed cell death 1 ligand 2 (Pdcd1lg2) from Mus musculus (Mouse).